The sequence spans 159 residues: Urease accessory protein UreE (159 aa).

This sequence belongs to the UreE family.

The protein localises to the cytoplasm. Its function is as follows. Involved in urease metallocenter assembly. Binds nickel. Probably functions as a nickel donor during metallocenter assembly. This Acinetobacter baylyi (strain ATCC 33305 / BD413 / ADP1) protein is Urease accessory protein UreE.